Consider the following 248-residue polypeptide: Adenylate kinase isoenzyme 6 homolog HBR1 (248 aa).

5 residues coordinate ATP: glycine 19, glycine 21, lysine 22, serine 23, and serine 24. Residues 49-72 (NISEIAKERDCIESYDAKLDTSIV) form an NMPbind region. The tract at residues 124-134 (TRNYNDLKLQE) is LID. Arginine 125 provides a ligand contact to ATP. The disordered stretch occupies residues 188–248 (DGVSNELNKQ…EMEHTEDIAQ (61 aa)). Over residues 202–238 (DSSDEGDDNSDSDEYELEEDEQEEEEEREEYDEETNE) the composition is skewed to acidic residues. Residues 239 to 248 (EMEHTEDIAQ) show a composition bias toward basic and acidic residues.

This sequence belongs to the adenylate kinase family. AK6 subfamily. In terms of assembly, interacts with small ribosomal subunit protein uS11. Not a structural component of 43S pre-ribosomes, but transiently interacts with them by binding to uS11.

The protein localises to the cytoplasm. It is found in the nucleus. It catalyses the reaction AMP + ATP = 2 ADP. It carries out the reaction ATP + H2O = ADP + phosphate + H(+). In terms of biological role, broad-specificity nucleoside monophosphate (NMP) kinase that catalyzes the reversible transfer of the terminal phosphate group between nucleoside triphosphates and monophosphates. Also has ATPase activity. Involved in the late cytoplasmic maturation steps of the 40S ribosomal particles, specifically 18S rRNA maturation. While NMP activity is not required for ribosome maturation, ATPase activity is. Associates transiently with small ribosomal subunit protein uS11. ATP hydrolysis breaks the interaction with uS11. May temporarily remove uS11 from the ribosome to enable a conformational change of the ribosomal RNA that is needed for the final maturation step of the small ribosomal subunit. Its NMP activity may have a role in nuclear energy homeostasis. Induces transcription of mating-type proteins ALPHA1 and ALPHA2 and moderately represses transcription of mating-type protein A1 in response to hemoglobin and growth signals. Involved in the induction of a high affinity fibronectin receptor by sub-inhibitory dosages of caspofungin. The chain is Adenylate kinase isoenzyme 6 homolog HBR1 (HBR1) from Candida albicans (strain SC5314 / ATCC MYA-2876) (Yeast).